Here is a 257-residue protein sequence, read N- to C-terminus: 1-(5-phosphoribosyl)-5-[(5-phosphoribosylamino)methylideneamino] imidazole-4-carboxamide isomerase (257 aa).

Asp8 acts as the Proton acceptor in catalysis. Asp130 acts as the Proton donor in catalysis.

The protein belongs to the HisA/HisF family.

The protein resides in the cytoplasm. It catalyses the reaction 1-(5-phospho-beta-D-ribosyl)-5-[(5-phospho-beta-D-ribosylamino)methylideneamino]imidazole-4-carboxamide = 5-[(5-phospho-1-deoxy-D-ribulos-1-ylimino)methylamino]-1-(5-phospho-beta-D-ribosyl)imidazole-4-carboxamide. It participates in amino-acid biosynthesis; L-histidine biosynthesis; L-histidine from 5-phospho-alpha-D-ribose 1-diphosphate: step 4/9. This is 1-(5-phosphoribosyl)-5-[(5-phosphoribosylamino)methylideneamino] imidazole-4-carboxamide isomerase from Chlorobium chlorochromatii (strain CaD3).